Consider the following 298-residue polypeptide: Protoheme IX farnesyltransferase (298 aa).

The next 8 membrane-spanning stretches (helical) occupy residues 24 to 44, 46 to 66, 97 to 117, 118 to 138, 146 to 166, 172 to 192, 231 to 251, and 278 to 298; these read VVSLIVFTAVIGMFLAVPAWP, WTTIWAGTLGIGLVASAAAAF, LVFAGVLGGSGLLLLHTVVNP, LTMWLTLATFVGYAVIYTVLL, IVIGGASGAMPPVLGWAAATG, ALLLFLIIFAWTPPHFWALAL, LLPVGTGMAGALYLVGAVLLG, and IWYLAALFAIMLLDHYFPIPV.

The protein belongs to the UbiA prenyltransferase family. Protoheme IX farnesyltransferase subfamily.

Its subcellular location is the cell inner membrane. It carries out the reaction heme b + (2E,6E)-farnesyl diphosphate + H2O = Fe(II)-heme o + diphosphate. It participates in porphyrin-containing compound metabolism; heme O biosynthesis; heme O from protoheme: step 1/1. Its function is as follows. Converts heme B (protoheme IX) to heme O by substitution of the vinyl group on carbon 2 of heme B porphyrin ring with a hydroxyethyl farnesyl side group. This chain is Protoheme IX farnesyltransferase, found in Thiobacillus denitrificans (strain ATCC 25259 / T1).